The following is a 124-amino-acid chain: Small ribosomal subunit protein uS12 (124 aa).

Asp-89 is modified (3-methylthioaspartic acid). Position 108 is an N6-acetyllysine (Lys-108).

It belongs to the universal ribosomal protein uS12 family. As to quaternary structure, part of the 30S ribosomal subunit. Contacts proteins S8 and S17. May interact with IF1 in the 30S initiation complex.

Functionally, with S4 and S5 plays an important role in translational accuracy. Its function is as follows. Interacts with and stabilizes bases of the 16S rRNA that are involved in tRNA selection in the A site and with the mRNA backbone. Located at the interface of the 30S and 50S subunits, it traverses the body of the 30S subunit contacting proteins on the other side and probably holding the rRNA structure together. The combined cluster of proteins S8, S12 and S17 appears to hold together the shoulder and platform of the 30S subunit. This Escherichia coli O139:H28 (strain E24377A / ETEC) protein is Small ribosomal subunit protein uS12.